Here is a 426-residue protein sequence, read N- to C-terminus: Trigger factor 1 (426 aa).

In terms of domain architecture, PPIase FKBP-type spans 163-248 (QDTVNIDFAG…VNKLKRKEYA (86 aa)).

It belongs to the FKBP-type PPIase family. Tig subfamily.

It localises to the cytoplasm. It catalyses the reaction [protein]-peptidylproline (omega=180) = [protein]-peptidylproline (omega=0). Functionally, involved in protein export. Acts as a chaperone by maintaining the newly synthesized protein in an open conformation. Functions as a peptidyl-prolyl cis-trans isomerase. In Desulfitobacterium hafniense (strain Y51), this protein is Trigger factor 1.